The primary structure comprises 65 residues: Large ribosomal subunit protein bL33m (65 aa).

The transit peptide at 1–8 (MFLSAVFF) directs the protein to the mitochondrion.

This sequence belongs to the bacterial ribosomal protein bL33 family. In terms of assembly, component of the mitochondrial large ribosomal subunit (mt-LSU). Mature mammalian 55S mitochondrial ribosomes consist of a small (28S) and a large (39S) subunit. The 28S small subunit contains a 12S ribosomal RNA (12S mt-rRNA) and 30 different proteins. The 39S large subunit contains a 16S rRNA (16S mt-rRNA), a copy of mitochondrial valine transfer RNA (mt-tRNA(Val)), which plays an integral structural role, and 52 different proteins.

Its subcellular location is the mitochondrion. The polypeptide is Large ribosomal subunit protein bL33m (MRPL33) (Homo sapiens (Human)).